The following is an 88-amino-acid chain: Small ribosomal subunit protein bS20 (88 aa).

The protein belongs to the bacterial ribosomal protein bS20 family.

Binds directly to 16S ribosomal RNA. The sequence is that of Small ribosomal subunit protein bS20 from Legionella pneumophila (strain Paris).